A 616-amino-acid chain; its full sequence is MSTIQSETDCYDIIEVLGKGTFGEVAKGWRRSTGEMVAIKILKNDAYRNRIIKNELKLLHCMRGLDPEEAHVIRFLEFFHDALKFYLVFELLEQNLFEFQKENNFAPLPARHIRTVTLQVLTALARLKELAIIHADLKPENIMLVDQTRCPFRVKVIDFGSASIFSEVRYVKEPYIQSRFYRAPEILLGLPFCEKVDVWSLGCVMAELHLGWPLYPGNNEYDQVRYICETQGLPKPHLLHAACKAHHFFKRNPHPDAANPWQLKSSADYLAETKVRPLERRKYMLKSLDQIETVNGGSVASRLTFPDREALAEHADLKSMVELIKRMLTWESHERISPSAALRHPFVSMQQLRSAHETTHYYQLSLRSYRLSLQVEGKPPTPVVAAEDGTPYYCLAEEKEAAGMGSVAGSSPFFREEKAPGMQRAIDQLDDLSLQEAGHGLWGETCTNAVSDMMVPLKAAITGHHVPDSGPEPILAFYSSRLAGRHKARKPPAGSKSDSNFSNLIRLSQVSPEDDRPCRGSSWEEGEHLGASAEPLAILQRDEDGPNIDNMTMEAERPDPELFDPSSCPGEWLSEPDCTLESVRGPRAQGLPPRRSHQHGPPRGATSFLQHVTGHH.

Positions 11–347 (YDIIEVLGKG…PSAALRHPFV (337 aa)) constitute a Protein kinase domain. ATP contacts are provided by residues 17-25 (LGKGTFGEV) and Lys-40. The active-site Proton acceptor is the Asp-136. Residues 486–616 (HKARKPPAGS…SFLQHVTGHH (131 aa)) are disordered. A compositionally biased stretch (polar residues) spans 496–511 (KSDSNFSNLIRLSQVS). Residue Ser-511 is modified to Phosphoserine.

This sequence belongs to the protein kinase superfamily. CMGC Ser/Thr protein kinase family. HIPK subfamily. In terms of processing, autophosphorylated.

It is found in the cytoplasm. The catalysed reaction is L-seryl-[protein] + ATP = O-phospho-L-seryl-[protein] + ADP + H(+). It catalyses the reaction L-threonyl-[protein] + ATP = O-phospho-L-threonyl-[protein] + ADP + H(+). In terms of biological role, protein kinase that phosphorylates human TP53 at Ser-9, and thus induces TP53 repression of BIRC5 promoter. May act as a corepressor of transcription factors (Potential). The protein is Homeodomain-interacting protein kinase 4 (HIPK4) of Homo sapiens (Human).